Reading from the N-terminus, the 201-residue chain is Fas apoptotic inhibitory molecule 1 (201 aa).

Belongs to the FAIM1 family.

The protein resides in the cytoplasm. Its function is as follows. Plays a role as an inducible effector molecule that mediates Fas resistance produced by surface Ig engagement in B cells. The polypeptide is Fas apoptotic inhibitory molecule 1 (FAIM) (Bos taurus (Bovine)).